The primary structure comprises 662 residues: 72 kDa type IV collagenase (662 aa).

An N-terminal signal peptide occupies residues Met-1–Ala-29. Residues Ala-30 to Asn-109 constitute a propeptide, activation peptide. A Cysteine switch motif is present at residues Pro-100–Val-107. Cys-102 contacts Zn(2+). The tract at residues Tyr-110–Val-221 is collagenase-like 1. Ca(2+) is bound by residues Asp-134 and Asp-168. Residues His-178 and Asp-180 each coordinate Zn(2+). Positions 185 and 186 each coordinate Ca(2+). His-193 provides a ligand contact to Zn(2+). Residues Gly-200, Gly-202, and Asp-204 each contribute to the Ca(2+) site. A Zn(2+)-binding site is contributed by His-206. Ca(2+)-binding residues include Asp-208, Asp-209, and Glu-211. Residues Arg-222–Ser-396 are collagen-binding. 3 consecutive Fibronectin type-II domains span residues Ala-228–His-276, Gly-286–Glu-334, and Ser-344–Asp-392. Intrachain disulfides connect Cys-233–Cys-259, Cys-247–Cys-274, Cys-291–Cys-317, Cys-305–Cys-332, Cys-349–Cys-375, and Cys-363–Cys-390. The tract at residues Leu-397 to Thr-467 is collagenase-like 2. His-403 is a binding site for Zn(2+). Residue Glu-404 is part of the active site. Residues His-407 and His-413 each coordinate Zn(2+). The required for inhibitor TIMP2 binding stretch occupies residues Ser-414–Cys-662. A disulfide bridge connects residues Cys-471 and Cys-662. Hemopexin repeat units follow at residues Asp-474–Leu-518, Pro-519–Pro-565, Val-567–Ile-615, and Pro-616–Cys-662. Positions 478, 523, and 571 each coordinate Ca(2+). Asn-575 carries N-linked (GlcNAc...) asparagine glycosylation. Residue Asp-620 participates in Ca(2+) binding. A glycan (N-linked (GlcNAc...) asparagine) is linked at Asn-644.

The protein belongs to the peptidase M10A family. Interacts (via the C-terminal hemopexin-like domains-containing region) with the integrin alpha-V/beta-3; the interaction promotes vascular invasion in angiogenic vessels and melamoma cells. Interacts (via the C-terminal PEX domain) with TIMP2 (via the C-terminal); the interaction inhibits the degradation activity. Interacts with GSK3B. It depends on Ca(2+) as a cofactor. Requires Zn(2+) as cofactor. In terms of processing, phosphorylation on multiple sites modulates enzymatic activity. Phosphorylated by PKC in vitro. The propeptide is processed by MMP14 (MT-MMP1) and MMP16 (MT-MMP3). Autocatalytic cleavage in the C-terminal produces the anti-angiogenic peptide, PEX. This processing appears to be facilitated by binding integrin integrinv/beta3.

It localises to the secreted. It is found in the extracellular space. The protein resides in the extracellular matrix. The protein localises to the membrane. Its subcellular location is the nucleus. The enzyme catalyses Cleavage of gelatin type I and collagen types IV, V, VII, X. Cleaves the collagen-like sequence Pro-Gln-Gly-|-Ile-Ala-Gly-Gln.. Functionally, ubiquitinous metalloproteinase that is involved in diverse functions such as remodeling of the vasculature, angiogenesis, tissue repair, tumor invasion, inflammation, and atherosclerotic plaque rupture. As well as degrading extracellular matrix proteins, can also act on several nonmatrix proteins such as big endothelial 1 and beta-type CGRP promoting vasoconstriction. Also cleaves KISS at a Gly-|-Leu bond. Appears to have a role in myocardial cell death pathways. Contributes to myocardial oxidative stress by regulating the activity of GSK3beta. Cleaves GSK3beta in vitro. Involved in the formation of the fibrovascular tissues. Its function is as follows. PEX, the C-terminal non-catalytic fragment of MMP2, possesses anti-angiogenic and anti-tumor properties and inhibits cell migration and cell adhesion to FGF2 and vitronectin. Ligand for integrin alpha-v/beta3 on the surface of blood vessels. This Rattus norvegicus (Rat) protein is 72 kDa type IV collagenase (Mmp2).